An 848-amino-acid polypeptide reads, in one-letter code: Translation initiation factor IF-2 (848 aa).

The disordered stretch occupies residues 1 to 20; that stretch reads MNESKGAVDSGLMSGKTERT. The tr-type G domain maps to 346 to 516; the sequence is PRAPVVTVMG…LLMAELLELK (171 aa). A G1 region spans residues 355-362; it reads GHVDHGKT. GTP is bound at residue 355–362; that stretch reads GHVDHGKT. The tract at residues 380–384 is G2; that stretch reads GITQH. The interval 402-405 is G3; sequence DTPG. GTP is bound by residues 402 to 406 and 456 to 459; these read DTPGH and NKID. A G4 region spans residues 456–459; sequence NKID. The G5 stretch occupies residues 492 to 494; sequence SAK.

This sequence belongs to the TRAFAC class translation factor GTPase superfamily. Classic translation factor GTPase family. IF-2 subfamily.

Its subcellular location is the cytoplasm. In terms of biological role, one of the essential components for the initiation of protein synthesis. Protects formylmethionyl-tRNA from spontaneous hydrolysis and promotes its binding to the 30S ribosomal subunits. Also involved in the hydrolysis of GTP during the formation of the 70S ribosomal complex. The sequence is that of Translation initiation factor IF-2 from Ehrlichia canis (strain Jake).